The following is a 247-amino-acid chain: UPF0280 protein MmarC5_0355 (247 aa).

It belongs to the UPF0280 family.

In Methanococcus maripaludis (strain C5 / ATCC BAA-1333), this protein is UPF0280 protein MmarC5_0355.